A 132-amino-acid chain; its full sequence is Small ribosomal subunit protein uS9 (132 aa).

This sequence belongs to the universal ribosomal protein uS9 family.

This chain is Small ribosomal subunit protein uS9, found in Methanothrix thermoacetophila (strain DSM 6194 / JCM 14653 / NBRC 101360 / PT) (Methanosaeta thermophila).